Here is a 309-residue protein sequence, read N- to C-terminus: Ribose-phosphate pyrophosphokinase (309 aa).

Residues 37–39 and 96–97 each bind ATP; these read DGE and RQ. The Mg(2+) site is built by histidine 130 and aspartate 169. Lysine 192 is an active-site residue. Residues arginine 194, aspartate 218, and 222–226 each bind D-ribose 5-phosphate; that span reads DTAGT.

It belongs to the ribose-phosphate pyrophosphokinase family. Class I subfamily. Homohexamer. Mg(2+) is required as a cofactor.

The protein localises to the cytoplasm. It carries out the reaction D-ribose 5-phosphate + ATP = 5-phospho-alpha-D-ribose 1-diphosphate + AMP + H(+). It participates in metabolic intermediate biosynthesis; 5-phospho-alpha-D-ribose 1-diphosphate biosynthesis; 5-phospho-alpha-D-ribose 1-diphosphate from D-ribose 5-phosphate (route I): step 1/1. In terms of biological role, involved in the biosynthesis of the central metabolite phospho-alpha-D-ribosyl-1-pyrophosphate (PRPP) via the transfer of pyrophosphoryl group from ATP to 1-hydroxyl of ribose-5-phosphate (Rib-5-P). This chain is Ribose-phosphate pyrophosphokinase, found in Campylobacter jejuni subsp. jejuni serotype O:2 (strain ATCC 700819 / NCTC 11168).